The primary structure comprises 331 residues: DNA-directed RNA polymerase subunit alpha (331 aa).

The tract at residues 1 to 226 (MLIAQRPTLT…ELFGLARELN (226 aa)) is alpha N-terminal domain (alpha-NTD). An alpha C-terminal domain (alpha-CTD) region spans residues 243–331 (LSSELSMPIE…SYDEDETTTN (89 aa)).

The protein belongs to the RNA polymerase alpha chain family. Homodimer. The RNAP catalytic core consists of 2 alpha, 1 beta, 1 beta' and 1 omega subunit. When a sigma factor is associated with the core the holoenzyme is formed, which can initiate transcription.

It catalyses the reaction RNA(n) + a ribonucleoside 5'-triphosphate = RNA(n+1) + diphosphate. Functionally, DNA-dependent RNA polymerase catalyzes the transcription of DNA into RNA using the four ribonucleoside triphosphates as substrates. This Clavibacter sepedonicus (Clavibacter michiganensis subsp. sepedonicus) protein is DNA-directed RNA polymerase subunit alpha.